A 162-amino-acid chain; its full sequence is Cyclic pyranopterin monophosphate synthase (162 aa).

Residues 75-77 (LCH) and 113-114 (ME) contribute to the substrate site. Asp-128 is a catalytic residue.

This sequence belongs to the MoaC family. As to quaternary structure, homohexamer; trimer of dimers.

The catalysed reaction is (8S)-3',8-cyclo-7,8-dihydroguanosine 5'-triphosphate = cyclic pyranopterin phosphate + diphosphate. It participates in cofactor biosynthesis; molybdopterin biosynthesis. In terms of biological role, catalyzes the conversion of (8S)-3',8-cyclo-7,8-dihydroguanosine 5'-triphosphate to cyclic pyranopterin monophosphate (cPMP). This chain is Cyclic pyranopterin monophosphate synthase, found in Burkholderia orbicola (strain MC0-3).